We begin with the raw amino-acid sequence, 255 residues long: Indole-3-glycerol phosphate synthase (255 aa).

The protein belongs to the TrpC family.

It catalyses the reaction 1-(2-carboxyphenylamino)-1-deoxy-D-ribulose 5-phosphate + H(+) = (1S,2R)-1-C-(indol-3-yl)glycerol 3-phosphate + CO2 + H2O. Its pathway is amino-acid biosynthesis; L-tryptophan biosynthesis; L-tryptophan from chorismate: step 4/5. This chain is Indole-3-glycerol phosphate synthase, found in Streptococcus gordonii (strain Challis / ATCC 35105 / BCRC 15272 / CH1 / DL1 / V288).